Consider the following 248-residue polypeptide: Ribosomal RNA small subunit methyltransferase G (248 aa).

Residues G85, F90, 108-110 (DSS), 137-138 (AE), and R156 each bind S-adenosyl-L-methionine.

Belongs to the methyltransferase superfamily. RNA methyltransferase RsmG family.

It is found in the cytoplasm. Functionally, specifically methylates the N7 position of a guanine in 16S rRNA. In Prochlorococcus marinus (strain NATL2A), this protein is Ribosomal RNA small subunit methyltransferase G.